The chain runs to 237 residues: MSLKDRYLNLELKLINKLQELPYVHQFIHDRISGRITLFLIVVGTLAFFNELYITIEMSLLQKNTSEELERGRIDESLKLHRMLVSDEYHGKEYKDEKSGIVIEEFEDRDKFFAKPVFVSELDVECNVIVDGKELLSTPLKFHVEFSPEDYENEKRPEFGTTLRVLRLRLYHYFKDCEIYRDIIKNEGGEGARKFTISNGVKIYNHKDELLPLNIDDVQLCFLKIDTGNTIKCEFIL.

Residues 36–56 (ITLFLIVVGTLAFFNELYITI) form a helical membrane-spanning segment.

It localises to the endoplasmic reticulum membrane. Its function is as follows. Part of the third module of ergosterol biosynthesis pathway that includes the late steps of the pathway. ERG29 regulates the activity of the iron-containing C4-methylsterol oxidase ERG25. The third module or late pathway involves the ergosterol synthesis itself through consecutive reactions that mainly occur in the endoplasmic reticulum (ER) membrane. Firstly, the squalene synthase ERG9 catalyzes the condensation of 2 farnesyl pyrophosphate moieties to form squalene, which is the precursor of all steroids. Squalene synthase is crucial for balancing the incorporation of farnesyl diphosphate (FPP) into sterol and nonsterol isoprene synthesis. Secondly, the squalene epoxidase ERG1 catalyzes the stereospecific oxidation of squalene to (S)-2,3-epoxysqualene, which is considered to be a rate-limiting enzyme in steroid biosynthesis. Then, the lanosterol synthase ERG7 catalyzes the cyclization of (S)-2,3 oxidosqualene to lanosterol, a reaction that forms the sterol core. In the next steps, lanosterol is transformed to zymosterol through a complex process involving various demethylation, reduction and desaturation reactions. The lanosterol 14-alpha-demethylase ERG11 (also known as CYP51) catalyzes C14-demethylation of lanosterol to produce 4,4'-dimethyl cholesta-8,14,24-triene-3-beta-ol, which is critical for ergosterol biosynthesis. The C-14 reductase ERG24 reduces the C14=C15 double bond of 4,4-dimethyl-cholesta-8,14,24-trienol to produce 4,4-dimethyl-cholesta-8,24-dienol. 4,4-dimethyl-cholesta-8,24-dienol is substrate of the C-4 demethylation complex ERG25-ERG26-ERG27 in which ERG25 catalyzes the three-step monooxygenation required for the demethylation of 4,4-dimethyl and 4alpha-methylsterols, ERG26 catalyzes the oxidative decarboxylation that results in a reduction of the 3-beta-hydroxy group at the C-3 carbon to an oxo group, and ERG27 is responsible for the reduction of the keto group on the C-3. ERG28 has a role as a scaffold to help anchor ERG25, ERG26 and ERG27 to the endoplasmic reticulum and ERG29 regulates the activity of the iron-containing C4-methylsterol oxidase ERG25. Then, the sterol 24-C-methyltransferase ERG6 catalyzes the methyl transfer from S-adenosyl-methionine to the C-24 of zymosterol to form fecosterol. The C-8 sterol isomerase ERG2 catalyzes the reaction which results in unsaturation at C-7 in the B ring of sterols and thus converts fecosterol to episterol. The sterol-C5-desaturase ERG3 then catalyzes the introduction of a C-5 double bond in the B ring to produce 5-dehydroepisterol. The C-22 sterol desaturase ERG5 further converts 5-dehydroepisterol into ergosta-5,7,22,24(28)-tetraen-3beta-ol by forming the C-22(23) double bond in the sterol side chain. Finally, ergosta-5,7,22,24(28)-tetraen-3beta-ol is substrate of the C-24(28) sterol reductase ERG4 to produce ergosterol. Functionally, plays a role in maintaining mitochondrial and plasma membrane integrity and consequently impacting the iron homeostasis, respiratory metabolism and antioxidant response. This Saccharomyces cerevisiae (strain ATCC 204508 / S288c) (Baker's yeast) protein is Ergosterol biosynthesis protein 29.